The primary structure comprises 71 residues: Large ribosomal subunit protein bL31 (71 aa).

Zn(2+)-binding residues include Cys-16, Cys-18, Cys-37, and Cys-40.

It belongs to the bacterial ribosomal protein bL31 family. Type A subfamily. As to quaternary structure, part of the 50S ribosomal subunit. Zn(2+) is required as a cofactor.

In terms of biological role, binds the 23S rRNA. This chain is Large ribosomal subunit protein bL31, found in Pseudoalteromonas atlantica (strain T6c / ATCC BAA-1087).